The sequence spans 237 residues: Ubiquinone biosynthesis O-methyltransferase (237 aa).

The S-adenosyl-L-methionine site is built by Arg-39, Gly-59, Asp-80, and Met-124.

The protein belongs to the methyltransferase superfamily. UbiG/COQ3 family.

It catalyses the reaction a 3-demethylubiquinol + S-adenosyl-L-methionine = a ubiquinol + S-adenosyl-L-homocysteine + H(+). The catalysed reaction is a 3-(all-trans-polyprenyl)benzene-1,2-diol + S-adenosyl-L-methionine = a 2-methoxy-6-(all-trans-polyprenyl)phenol + S-adenosyl-L-homocysteine + H(+). It participates in cofactor biosynthesis; ubiquinone biosynthesis. O-methyltransferase that catalyzes the 2 O-methylation steps in the ubiquinone biosynthetic pathway. This Vibrio atlanticus (strain LGP32) (Vibrio splendidus (strain Mel32)) protein is Ubiquinone biosynthesis O-methyltransferase.